The primary structure comprises 393 residues: Sulfate adenylyltransferase (393 aa).

It belongs to the sulfate adenylyltransferase family.

The catalysed reaction is sulfate + ATP + H(+) = adenosine 5'-phosphosulfate + diphosphate. Its pathway is sulfur metabolism; hydrogen sulfide biosynthesis; sulfite from sulfate: step 1/3. This is Sulfate adenylyltransferase from Synechococcus sp. (strain JA-3-3Ab) (Cyanobacteria bacterium Yellowstone A-Prime).